Consider the following 469-residue polypeptide: Ribosomal protein uS12 methylthiotransferase RimO (469 aa).

The MTTase N-terminal domain maps to 1–115 (MKFHIITLGC…IGSVVAGGVA (115 aa)). The [4Fe-4S] cluster site is built by Cys10, Cys46, Cys78, Cys180, Cys184, and Cys187. Residues 166–398 (NKRGPSAYLK…MAVQQVISRA (233 aa)) enclose the Radical SAM core domain. A TRAM domain is found at 401-469 (ARFVGQTMKV…TDYDLWGEIV (69 aa)).

Belongs to the methylthiotransferase family. RimO subfamily. [4Fe-4S] cluster serves as cofactor.

The protein localises to the cytoplasm. The catalysed reaction is L-aspartate(89)-[ribosomal protein uS12]-hydrogen + (sulfur carrier)-SH + AH2 + 2 S-adenosyl-L-methionine = 3-methylsulfanyl-L-aspartate(89)-[ribosomal protein uS12]-hydrogen + (sulfur carrier)-H + 5'-deoxyadenosine + L-methionine + A + S-adenosyl-L-homocysteine + 2 H(+). In terms of biological role, catalyzes the methylthiolation of an aspartic acid residue of ribosomal protein uS12. This Herpetosiphon aurantiacus (strain ATCC 23779 / DSM 785 / 114-95) protein is Ribosomal protein uS12 methylthiotransferase RimO.